The primary structure comprises 227 residues: Small ribosomal subunit protein uS3 (227 aa).

Positions leucine 38–arginine 106 constitute a KH type-2 domain.

The protein belongs to the universal ribosomal protein uS3 family. Part of the 30S ribosomal subunit. Forms a tight complex with proteins S10 and S14.

Functionally, binds the lower part of the 30S subunit head. Binds mRNA in the 70S ribosome, positioning it for translation. The polypeptide is Small ribosomal subunit protein uS3 (Paramagnetospirillum magneticum (strain ATCC 700264 / AMB-1) (Magnetospirillum magneticum)).